The chain runs to 870 residues: Dynamin-2 (870 aa).

In terms of domain architecture, Dynamin-type G spans 28–294 (HLDLPQIAVV…LTNHIRESLP (267 aa)). Residues 38–45 (GGQSAGKS) are G1 motif. GDP-binding residues include Ser41, Gly43, Lys44, Ser45, Ser46, Arg59, and Gly60. The tract at residues 64–66 (VTR) is G2 motif. Residues 136 to 139 (DLPG) form a G3 motif region. The segment at 205–208 (TKLD) is G4 motif. Positions 206, 208, and 211 each coordinate GDP. Tyr231 carries the post-translational modification Phosphotyrosine. The interval 235 to 238 (VNRS) is G5 motif. Residues Asn236, Arg237, and Gln239 each contribute to the GDP site. N6-acetyllysine is present on Lys299. Positions 519-625 (LVIRRGWLTI…WKASFLRAGV (107 aa)) constitute a PH domain. At Tyr597 the chain carries Phosphotyrosine. Lys598 is subject to N6-acetyllysine. The GED domain maps to 653 to 744 (VETIRNLVDS…IIGDISTSTV (92 aa)). Residues 741 to 870 (TSTVSTPVPP…IRPAEPSLLD (130 aa)) form a disordered region. Phosphothreonine is present on Thr755. The span at 756-767 (WLQNTSSHSPTP) shows a compositional bias: polar residues. At Ser764 the chain carries Phosphoserine; by CDK1. Residues 826 to 846 (SAPPQIPSRPARIPPGIPPGV) are compositionally biased toward pro residues. Residues 847–864 (PSRRAPAAPSRPTIIRPA) are compositionally biased toward low complexity.

The protein belongs to the TRAFAC class dynamin-like GTPase superfamily. Dynamin/Fzo/YdjA family. In terms of assembly, oligomerizes into a helical polymer that self-assembles around the vesicle membrane, when associated to the menbrane through lipid binding. Interacts with SHANK1 and SHANK2. Interacts with SNX9. Interacts (via C-terminal proline-rich domain (PRD)) with SNX18 (via SH3 domain); this interaction regulates ATG9A and ATG16L1 trafficking from recycling endosomes to sites of autophagosome formation. Interacts with SNX33 (via SH3 domain). Interacts with PSTPIP1 (via SH3 domain). Interacts with CTNND2. Interacts (via C-terminal proline-rich domain (PRD)) with BIN1 (via SH3 domain); this interaction allows the recruitment of DNM2 to the membrane tubules and inhibits self-assembly-stimulated GTPase activity on the membrane. Interacts with GABARAP, GABARAPL1 and GABARAPL2. Interacts with MAP1LC3B (the lipidate and non-lipidated LC3 form); this interaction mediates recycling endosome scission leading to autophagosome release. Interacts with ITSN1. Interacts with MYOF. May interact with PIK3C3. May be a component of a complex composed of RAB5A (in GDP-bound form), DYN2 and PIK3C3. Interacts with SDC4; this interaction is markedly enhanced at focal ahesion site upon induction of focal adhesions and stress-fiber formation. Interacts with ACTN1. Interacts with CTTN; this interaction stimulates the intrinsic GTPase activity of DNM2 and stabilizes the association of DNM2 and actin filaments; in addition this interaction is stimulated by ligand binding to the receptor, leading to the recruitment of the DNM2-CTTN complex to the sequestered receptor-ligand complex to its internalization. Interacts with NOSTRIN (via SH3 domain); this interaction allows the recruitment of NOS3 to dynamin-positive structures. Interacts (via C-terminal proline-rich domain (PRD)) with SH3BP4 (via SH3 domain); this interaction controls the GTPase activity and is prevented by EGFR-induced tyrosine phosphorylation of either DNM2 or SH3BP4. Interacts with MYO1E (via SH3 domain). Interacts with TUBG1; this interaction may participate in centrosome cohesion. Phosphorylation at Ser-848 by GSK3-alpha relieves the inhibition of BIN1 and promotes endocytosis. Phosphorylation at Ser-764 by CDK1 is greatly increased upon mitotic entry. It regulates cytokinesis downstream of calcineurin, and does not affect clathrin-mediated endocytosis. Dephosphorylated by calcineurin/PP2 during cytokinesis in a Ca(2+)- and calmodulin-dependent manner. Phosphorylated on tyrosine residues by EGFR. Phosphorylated on tyrosine residues after activation of SRC. In terms of tissue distribution, ubiquitously expressed. Brain expression is restricted to glial cells and fibroblasts. Highest levels in the testis.

Its subcellular location is the cytoplasm. The protein resides in the cytoskeleton. It localises to the cytoplasmic vesicle. The protein localises to the clathrin-coated vesicle. It is found in the cell projection. Its subcellular location is the uropodium. The protein resides in the endosome. It localises to the microtubule organizing center. The protein localises to the centrosome. It is found in the centriole. Its subcellular location is the recycling endosome. The protein resides in the phagocytic cup. It localises to the phagosome membrane. The protein localises to the podosome. It is found in the cell junction. Its subcellular location is the postsynaptic density. The protein resides in the synapse. It localises to the synaptosome. The protein localises to the midbody. It is found in the membrane. Its subcellular location is the clathrin-coated pit. The protein resides in the cell membrane. The catalysed reaction is GTP + H2O = GDP + phosphate + H(+). In terms of biological role, catalyzes the hydrolysis of GTP and utilizes this energy to mediate vesicle scission at plasma membrane during endocytosis and filament remodeling at many actin structures during organization of the actin cytoskeleton. Plays an important role in vesicular trafficking processes, namely clathrin-mediated endocytosis (CME), exocytic and clathrin-coated vesicle from the trans-Golgi network, and PDGF stimulated macropinocytosis. During vesicular trafficking process, associates to the membrane, through lipid binding, and self-assembles into ring-like structure through oligomerization to form a helical polymer around the vesicle membrane and leading to vesicle scission. Plays a role in organization of the actin cytoskeleton by mediating arrangement of stress fibers and actin bundles in podocytes. During organization of the actin cytoskeleton, self-assembles into ring-like structure that directly bundles actin filaments to form typical membrane tubules decorated with dynamin spiral polymers. Self-assembly increases GTPase activity and the GTP hydrolysis causes the rapid depolymerization of dynamin spiral polymers, and results in dispersion of actin bundles. Remodels, through its interaction with CTTN, bundled actin filaments in a GTPase-dependent manner and plays a role in orchestrating the global actomyosin cytoskeleton. The interaction with CTTN stabilizes the interaction of DNM2 and actin filaments and stimulates the intrinsic GTPase activity that results in actin filament-barbed ends and increases the sensitivity of filaments in bundles to the actin depolymerizing factor, CFL1. Plays a role in the autophagy process, by participating in the formation of ATG9A vesicles destined for the autophagosomes through its interaction with SNX18, by mediating recycling endosome scission leading to autophagosome release through MAP1LC3B interaction and by regulating maturation of apoptotic cell corpse-containing phagosomes by recruiting PIK3C3 to the phagosome membrane. Also plays a role in cytokinesis. May participate in centrosome cohesion through its interaction with TUBG1. Plays a role in the regulation of neuron morphology, axon growth and formation of neuronal growth cones. Involved in membrane tubulation. The chain is Dynamin-2 from Rattus norvegicus (Rat).